Reading from the N-terminus, the 444-residue chain is Probable D-serine dehydratase (444 aa).

Lys-110 carries the N6-(pyridoxal phosphate)lysine modification.

This sequence belongs to the serine/threonine dehydratase family. DsdA subfamily. It depends on pyridoxal 5'-phosphate as a cofactor.

The enzyme catalyses D-serine = pyruvate + NH4(+). This chain is Probable D-serine dehydratase, found in Burkholderia thailandensis (strain ATCC 700388 / DSM 13276 / CCUG 48851 / CIP 106301 / E264).